The following is a 664-amino-acid chain: UvrABC system protein B (664 aa).

Residues 25–170 form the Helicase ATP-binding domain; the sequence is NSILLGNKYQ…FVGQRISIKE (146 aa). ATP is bound at residue 38–45; it reads GVTGSGKT. The short motif at 91 to 114 is the Beta-hairpin element; sequence YYDYYQPESYVPSKDLFIEKEATI. One can recognise a Helicase C-terminal domain in the interval 429-595; sequence QMEDLYIEIQ…TIVKKIQNIL (167 aa). Residues 622–657 enclose the UVR domain; that stretch reads KKLIDKLKFELEEAVNDERFEDAIVLRDKIKELGSK.

Belongs to the UvrB family. As to quaternary structure, forms a heterotetramer with UvrA during the search for lesions. Interacts with UvrC in an incision complex.

Its subcellular location is the cytoplasm. Its function is as follows. The UvrABC repair system catalyzes the recognition and processing of DNA lesions. A damage recognition complex composed of 2 UvrA and 2 UvrB subunits scans DNA for abnormalities. Upon binding of the UvrA(2)B(2) complex to a putative damaged site, the DNA wraps around one UvrB monomer. DNA wrap is dependent on ATP binding by UvrB and probably causes local melting of the DNA helix, facilitating insertion of UvrB beta-hairpin between the DNA strands. Then UvrB probes one DNA strand for the presence of a lesion. If a lesion is found the UvrA subunits dissociate and the UvrB-DNA preincision complex is formed. This complex is subsequently bound by UvrC and the second UvrB is released. If no lesion is found, the DNA wraps around the other UvrB subunit that will check the other stand for damage. This is UvrABC system protein B from Borreliella afzelii (strain PKo) (Borrelia afzelii).